A 1279-amino-acid polypeptide reads, in one-letter code: Sterol regulatory element-binding protein cleavage-activating protein (1279 aa).

Residues 1–18 (MTLTERLREKISQAFYNH) are Cytoplasmic-facing. Residues 19-39 (GLLCASYPIPIILFTGLCILA) traverse the membrane as a helical segment. The Lumenal portion of the chain corresponds to 40-279 (CCYPLLKLPL…SLVHVHFKEE (240 aa)). The segment at 46–284 (KLPLPGTGPV…HFKEEIGIAE (239 aa)) is loop-1. The disordered stretch occupies residues 60-81 (PVKDYSPPPSASDHKPGEPSEQ). N-linked (GlcNAc...) asparagine glycosylation occurs at Asn263. The helical transmembrane segment at 280-300 (IGIAELIPLVTTYIILFAYIY) threads the bilayer. The SSD domain occupies 284–442 (ELIPLVTTYI…MPFFTTVLSI (159 aa)). Over 301 to 312 (FSTRKIDMVKSK) the chain is Cytoplasmic. Residues 313 to 333 (WGLALAAVVTVLSSLLMSVGL) form a helical membrane-spanning segment. At 334-344 (CTLFGLTPTLN) the chain is on the lumenal side. A helical membrane pass occupies residues 345–365 (GGEIFPYLVVVIGLENVLVLT). Over 366-401 (KSVVSTPVDLEVKLRIAQGLSSESWSIMKNMATELG) the chain is Cytoplasmic. A helical transmembrane segment spans residues 402-422 (IILIGYFTLVPAIQEFCLFAV). Residue Val423 is a topological domain, lumenal. The helical transmembrane segment at 424–444 (GLVSDFFLQMPFFTTVLSIDI) threads the bilayer. The Cytoplasmic segment spans residues 445-518 (RRMELADLNK…FLARTRLAQR (74 aa)). Positions 447–452 (MELADL) match the ER export signal motif. Residues Lys454 and Lys466 each participate in a glycyl lysine isopeptide (Lys-Gly) (interchain with G-Cter in ubiquitin) cross-link. The helical transmembrane segment at 519-539 (LIMAGTVVWIGILAYTDPAGL) threads the bilayer. The interval 535 to 710 (DPAGLRTYLA…QAHRDVTLYK (176 aa)) is loop-7. Residues 540–707 (RTYLAAQVTE…GVAQAHRDVT (168 aa)) lie on the Lumenal side of the membrane. A disordered region spans residues 588-617 (LENQTLPGEPPEPGGQAEGVHDSPAPEVTW). N-linked (GlcNAc...) asparagine glycans are attached at residues Asn590 and Asn641. A disordered region spans residues 668–696 (EGRHPQDSRSAWSPPQPAQGGLWDAGPKG). The helical transmembrane segment at 708–728 (LYKVAALGLATGILLVLLLCL) threads the bilayer. At 729–1279 (YRVLCPRNYG…YVPSVLEKLD (551 aa)) the chain is on the cytoplasmic side. The segment at 730–1279 (RVLCPRNYGQ…YVPSVLEKLD (550 aa)) is interaction with SREBF2. A WD 1 repeat occupies 770–810 (VLRGHLMDIECLASDGMLLVSCCLAGHVCVWDAQTGDCLTR). Residues Ser821, Ser837, Ser843, and Ser850 each carry the phosphoserine modification. Disordered stretches follow at residues 834–868 (ERLSDGGKASPEEPGDSPPLRHRPRGTPLPSLFGD), 883–903 (HPRLPELDHPEPRHRSGCRRT), and 925–959 (VPMHTPAPRPPSPGPTPPQTPEDEGSFPPEKGSPS). Over residues 885–896 (RLPELDHPEPRH) the composition is skewed to basic and acidic residues. Pro residues predominate over residues 929–944 (TPAPRPPSPGPTPPQT). A Phosphoserine modification is found at Ser936. 2 WD repeats span residues 952 to 1002 (PPEK…LRCS) and 1005 to 1042 (EVASGITALVFLDKRIVAARLNGSLDFFSLETHTALSP). The residue at position 1051 (Arg1051) is an Omega-N-methylarginine. WD repeat units lie at residues 1077–1114 (AHQKPITALKAAAGRLVTGSQDHTLRVFRLEDSCCLFT), 1117–1155 (GHSGAITTVYIDQTMVLASGGQDGAICLWDVLTGSRVSH), 1158–1195 (AHRGDVTSLTCTTSCVISSGLDDLISIWDRSTGIKLYS), and 1197–1235 (QQDLGCGASLGVISDNLLVTGGQGCVSFWDLNYGDLLQT).

This sequence belongs to the WD repeat SCAP family. As to quaternary structure, membrane region forms a homotetramer. Component of the SCAP-SREBP complex (composed of SCAP and SREBF1/SREBP1 or SREBF2/SREBP2); interacts with SREBF1/SREBP1 or SREBF2/SREBP2 through its C-terminal cytoplasmic domain. Forms a ternary complex with INSIG1 or INSIG2 through its transmembrane domains at high sterol concentrations. Interacts with PAQR3; the interaction anchors the SCAP-SREBP complex to the Golgi apparatus in low cholesterol conditions. Interacts with the SEC23-SEC24 complex in a SAR1-GTP-dependent manner through an ER export signal in its third cytoplasmic loop. Interacts with RNF139; the interaction inhibits the interaction of SCAP with SEC24B and hampering the ER to Golgi transport of the SCAP-SREBP complex. Interacts with SPRING1. In terms of processing, ubiquitinated at Lys-454 and Lys-466. RNF145 triggers ubiquitination of SCAP, likely inhibiting SCAP-SREBP complex transport to the Golgi apparatus and the subsequent processing/maturation of SREBF2/SREBP2. As to expression, widely expressed with higher levels in lung, kidney, gut, brain and adipose tissue. Expressed in liver and muscle. Isoform 3 expressed in testis. In terms of tissue distribution, expressed in testis.

The protein resides in the endoplasmic reticulum membrane. The protein localises to the golgi apparatus membrane. It is found in the cytoplasmic vesicle. It localises to the COPII-coated vesicle membrane. Escort protein required for cholesterol as well as lipid homeostasis. Regulates export of the SCAP-SREBP complex from the endoplasmic reticulum to the Golgi upon low cholesterol, thereby regulating the processing of sterol regulatory element-binding proteins (SREBPs) SREBF1/SREBP1 and SREBF2/SREBP2. At high sterol concentrations, formation of a ternary complex with INSIG (INSIG1 or INSIG2) leads to mask the ER export signal in SCAP, promoting retention of the complex in the endoplasmic reticulum. Low sterol concentrations trigger release of INSIG, a conformational change in the SSD domain of SCAP, unmasking of the ER export signal, promoting recruitment into COPII-coated vesicles and transport of the SCAP-SREBP to the Golgi: in the Golgi, SREBPs are then processed, releasing the transcription factor fragment of SREBPs from the membrane, its import into the nucleus and up-regulation of LDLR, INSIG1 and the mevalonate pathway. Binds cholesterol via its SSD domain. The polypeptide is Sterol regulatory element-binding protein cleavage-activating protein (Sus scrofa (Pig)).